We begin with the raw amino-acid sequence, 458 residues long: UDP-N-acetylmuramate--L-alanine ligase (458 aa).

An ATP-binding site is contributed by 112–118; it reads GTHGKTT.

Belongs to the MurCDEF family.

It is found in the cytoplasm. It catalyses the reaction UDP-N-acetyl-alpha-D-muramate + L-alanine + ATP = UDP-N-acetyl-alpha-D-muramoyl-L-alanine + ADP + phosphate + H(+). The protein operates within cell wall biogenesis; peptidoglycan biosynthesis. In terms of biological role, cell wall formation. The polypeptide is UDP-N-acetylmuramate--L-alanine ligase (Syntrophotalea carbinolica (strain DSM 2380 / NBRC 103641 / GraBd1) (Pelobacter carbinolicus)).